The following is a 689-amino-acid chain: MTSDSSDTAKQIGSGQPSGSPADMRRRDGVAPEQEVDPASLETDEDDEARLPDLPDEPVDAVAEAPLAIGRAAIEHAVRHAPTSPGVYRMMNAARDVLYVGKAKNVRKRLSSYARPTGQVMRIARMIAATAAVEIVSTGTETEALLLEANLIKQLRPRFNVQLRDDKSFPYILITGDHWAPQLLKHRGAQSRPGRYFGPFASAGAVGRTITALQRAFLVRSCTDSFFESRTRPCLLYQIKRCAGPCTGEIDFPGYTALVREATDFLSGRSRAVKEDLARAMEQAAADLAFERAALYRDRLAALSAIQSQQGINPRTVEEADVFAIHQEGGYFCVEVFFFRTGQNWGNRAYFPRAEKSFTPEEVLGSFLAQFYDDKPPPRLILLSHRIEESELLAHALSIKAGCKVVVSTPQRGEKKELVAHALTNAREALGRKLADTATQSRLLQGLAALLGLPQPPQRVEVYDNSHIQGANAVGAMIVAGPEGFLKNQYRKFNIRSESLTPGDDYAMMREVLERRFKRLLTQKAADSRAAAEQDSAPQWPDLVIIDGGLGQLNAARGVVDALGLSRVSLMAVAKGPDRDAGRETLFLPDRPAIKLEPRDPVLYFIQRLRDEAHRFVIGSHRKLRRKDIREAGLQEVPGIGPARKRALLHHFGTLKEIERASLADLGKVPGISAESARRIFDFFHARPA.

Polar residues predominate over residues 1–19; sequence MTSDSSDTAKQIGSGQPSG. Residues 1-59 are disordered; that stretch reads MTSDSSDTAKQIGSGQPSGSPADMRRRDGVAPEQEVDPASLETDEDDEARLPDLPDEPV. Positions 42 to 59 are enriched in acidic residues; sequence ETDEDDEARLPDLPDEPV. Residues 83 to 161 form the GIY-YIG domain; that stretch reads TSPGVYRMMN…IKQLRPRFNV (79 aa). In terms of domain architecture, UVR spans 271–306; the sequence is RAVKEDLARAMEQAAADLAFERAALYRDRLAALSAI.

The protein belongs to the UvrC family. Interacts with UvrB in an incision complex.

The protein localises to the cytoplasm. In terms of biological role, the UvrABC repair system catalyzes the recognition and processing of DNA lesions. UvrC both incises the 5' and 3' sides of the lesion. The N-terminal half is responsible for the 3' incision and the C-terminal half is responsible for the 5' incision. The polypeptide is UvrABC system protein C (Nitrobacter winogradskyi (strain ATCC 25391 / DSM 10237 / CIP 104748 / NCIMB 11846 / Nb-255)).